The following is a 262-amino-acid chain: Acyl-[acyl-carrier-protein]--UDP-N-acetylglucosamine O-acyltransferase (262 aa).

Belongs to the transferase hexapeptide repeat family. LpxA subfamily. Homotrimer.

It is found in the cytoplasm. The enzyme catalyses a (3R)-hydroxyacyl-[ACP] + UDP-N-acetyl-alpha-D-glucosamine = a UDP-3-O-[(3R)-3-hydroxyacyl]-N-acetyl-alpha-D-glucosamine + holo-[ACP]. It functions in the pathway glycolipid biosynthesis; lipid IV(A) biosynthesis; lipid IV(A) from (3R)-3-hydroxytetradecanoyl-[acyl-carrier-protein] and UDP-N-acetyl-alpha-D-glucosamine: step 1/6. Involved in the biosynthesis of lipid A, a phosphorylated glycolipid that anchors the lipopolysaccharide to the outer membrane of the cell. The protein is Acyl-[acyl-carrier-protein]--UDP-N-acetylglucosamine O-acyltransferase of Salmonella paratyphi B (strain ATCC BAA-1250 / SPB7).